The primary structure comprises 218 residues: ATP synthase subunit a (218 aa).

Helical transmembrane passes span 17–37 (IYST…GIFL), 75–95 (YLPL…SWFI), 104–124 (DLST…IFGI), 162–184 (LFGN…PFLL), and 196–216 (GTIQ…NFVH).

This sequence belongs to the ATPase A chain family. F-type ATPases have 2 components, CF(1) - the catalytic core - and CF(0) - the membrane proton channel. CF(1) has five subunits: alpha(3), beta(3), gamma(1), delta(1), epsilon(1). CF(0) has three main subunits: a(1), b(2) and c(9-12). The alpha and beta chains form an alternating ring which encloses part of the gamma chain. CF(1) is attached to CF(0) by a central stalk formed by the gamma and epsilon chains, while a peripheral stalk is formed by the delta and b chains. In this bacterium the a and b subunits are transcribed but do not seem to be translated, thus the ATP synthase consists of the alpha, beta, gamma, delta, epsilon and c subunits.

It is found in the cell membrane. In terms of biological role, key component of the proton channel; it plays a direct role in the translocation of protons across the membrane. The sequence is that of ATP synthase subunit a from Moorella thermoacetica (strain ATCC 39073 / JCM 9320).